The primary structure comprises 1052 residues: ATP-dependent DNA helicase MPH1 (1052 aa).

Residues 89 to 256 (IVRKGLLQNI…EVVNNLNISK (168 aa)) form the Helicase ATP-binding domain. 102 to 109 (IPTGMGKT) serves as a coordination point for ATP. A DEAH box motif is present at residues 204-207 (DEAH). The Helicase C-terminal domain maps to 432–649 (ELTQFFYENP…HLVQYRKSDR (218 aa)). Disordered stretches follow at residues 495-550 (HGPK…NQKQ), 798-832 (IGDT…DLPL), 869-898 (SKRQ…QPEV), and 1002-1052 (HTVS…DSDF). Residues 503 to 532 (SDREKRLEEERRMDEEKKQAALQEKLERTS) are compositionally biased toward basic and acidic residues. Over residues 534–549 (RTGSSEEAQLSGMNQK) the composition is skewed to polar residues. 2 stretches are compositionally biased toward low complexity: residues 875-898 (QPEV…QPEV) and 1005-1028 (SQSQ…QQAS). A compositionally biased stretch (basic and acidic residues) spans 1029–1040 (QKDRSSQDKDLT). Acidic residues predominate over residues 1043–1052 (ELEDLLDSDF).

Belongs to the DEAD box helicase family. DEAH subfamily. FANCM sub-subfamily. In terms of assembly, interacts with the MHF histone-fold complex to form the FANCM-MHF complex.

The protein resides in the nucleus. It catalyses the reaction ATP + H2O = ADP + phosphate + H(+). In terms of biological role, ATP-dependent DNA helicase involved in DNA damage repair by homologous recombination and in genome maintenance. Capable of unwinding D-loops. Plays a role in limiting crossover recombinants during mitotic DNA double-strand break (DSB) repair. Component of a FANCM-MHF complex which promotes gene conversion at blocked replication forks, probably by reversal of the stalled fork. This is ATP-dependent DNA helicase MPH1 from Candida glabrata (strain ATCC 2001 / BCRC 20586 / JCM 3761 / NBRC 0622 / NRRL Y-65 / CBS 138) (Yeast).